Here is a 1038-residue protein sequence, read N- to C-terminus: Isoleucine--tRNA ligase (1038 aa).

Residues 47 to 57 (PFATGLPHYGH) carry the 'HIGH' region motif. Residues 591–595 (KMSKR) carry the 'KMSKS' region motif. Lys594 is an ATP binding site.

This sequence belongs to the class-I aminoacyl-tRNA synthetase family. IleS type 2 subfamily. In terms of assembly, monomer. It depends on Zn(2+) as a cofactor.

The protein resides in the cytoplasm. It carries out the reaction tRNA(Ile) + L-isoleucine + ATP = L-isoleucyl-tRNA(Ile) + AMP + diphosphate. Catalyzes the attachment of isoleucine to tRNA(Ile). As IleRS can inadvertently accommodate and process structurally similar amino acids such as valine, to avoid such errors it has two additional distinct tRNA(Ile)-dependent editing activities. One activity is designated as 'pretransfer' editing and involves the hydrolysis of activated Val-AMP. The other activity is designated 'posttransfer' editing and involves deacylation of mischarged Val-tRNA(Ile). This chain is Isoleucine--tRNA ligase, found in Protochlamydia amoebophila (strain UWE25).